Reading from the N-terminus, the 373-residue chain is Alanine dehydrogenase (373 aa).

Substrate-binding residues include R15 and K74. H95 (proton donor/acceptor) is an active-site residue. NAD(+) contacts are provided by residues S133, 177-178, D197, S219, 238-239, 266-269, and 298-301; these read QA, VL, IAID, and VANM. D269 (proton donor/acceptor) is an active-site residue.

Belongs to the AlaDH/PNT family. In terms of assembly, homohexamer. Trimer of dimer.

The catalysed reaction is L-alanine + NAD(+) + H2O = pyruvate + NH4(+) + NADH + H(+). It participates in amino-acid degradation; L-alanine degradation via dehydrogenase pathway; NH(3) and pyruvate from L-alanine: step 1/1. Functionally, catalyzes the reversible reductive amination of pyruvate to L-alanine. May play a role in cell wall synthesis as L-alanine is an important constituent of the peptidoglycan layer. This Staphylococcus haemolyticus (strain JCSC1435) protein is Alanine dehydrogenase (ald).